The sequence spans 94 residues: Large ribosomal subunit protein bL31 (94 aa).

The tract at residues 65–94 (YGMADSENDSTDKKKTTNEKKVSDSPSKES) is disordered. Residues 74-94 (STDKKKTTNEKKVSDSPSKES) are compositionally biased toward basic and acidic residues.

It belongs to the bacterial ribosomal protein bL31 family. Type A subfamily. Part of the 50S ribosomal subunit.

In terms of biological role, binds the 23S rRNA. The protein is Large ribosomal subunit protein bL31 of Prochlorococcus marinus (strain MIT 9211).